The sequence spans 146 residues: MNKQVIEVLNKQVADWSVLFTKLHNFHWYVKGPQFFTLHEKFEELYTESATHIDEIAERILAIGGKPVATMKEYLEISSIQEAAYGETAEGMVEAIMKDYEMMLVELKKGMEIAQNSDDEMTSDLLLGIYTELEKHAWMLRAFLNQ.

Positions 27, 54, and 58 each coordinate Fe cation.

The protein belongs to the Dps family. In terms of assembly, the 12 subunits form a hollow sphere into which the mineral iron core of up to 500 Fe(3+) can be deposited. Homododecamer.

Its subcellular location is the cytoplasm. It catalyses the reaction 2 Fe(2+) + H2O2 + 2 H(+) = 2 Fe(3+) + 2 H2O. Its function is as follows. Protects DNA from oxidative damage by sequestering intracellular Fe(2+) ion and storing it in the form of Fe(3+) oxyhydroxide mineral. One hydrogen peroxide oxidizes two Fe(2+) ions, which prevents hydroxyl radical production by the Fenton reaction. It is capable of binding and sequestering Fe(2+) ion. Does not bind DNA. This Bacillus anthracis protein is DNA protection during starvation protein 2 (dps2).